Reading from the N-terminus, the 312-residue chain is Very-long-chain 3-oxoacyl-CoA reductase (312 aa).

The helical transmembrane segment at 4–24 (ALPAAGFLYWVGAGTVAYLAL) threads the bilayer. NADP(+) is bound at residue 50–79 (GEWAVVTGGTDGIGKSYAEELAKRGMKVVL). Helical transmembrane passes span 182-202 (GAIL…LTIY) and 271-291 (GYLI…WIYL). A substrate-binding site is contributed by Ser-189. Tyr-202 (proton acceptor) is an active-site residue. Positions 308 to 312 (KIKKN) match the Di-lysine motif motif.

It belongs to the short-chain dehydrogenases/reductases (SDR) family. 17-beta-HSD 3 subfamily.

Its subcellular location is the endoplasmic reticulum membrane. It catalyses the reaction a very-long-chain (3R)-3-hydroxyacyl-CoA + NADP(+) = a very-long-chain 3-oxoacyl-CoA + NADPH + H(+). It carries out the reaction 17beta-estradiol + NAD(+) = estrone + NADH + H(+). The enzyme catalyses 17beta-estradiol + NADP(+) = estrone + NADPH + H(+). The catalysed reaction is 3-oxooctadecanoyl-CoA + NADPH + H(+) = (3R)-hydroxyoctadecanoyl-CoA + NADP(+). It catalyses the reaction (7Z,10Z,13Z,16Z)-3-oxodocosatetraenoyl-CoA + NADPH + H(+) = (3R)-hydroxy-(7Z,10Z,13Z,16Z)-docosatetraenoyl-CoA + NADP(+). It carries out the reaction 3-oxo-(7Z,10Z,13Z,16Z,19Z)-docosapentaenoyl-CoA + NADPH + H(+) = (3R)-hydroxy-(7Z,10Z,13Z,16Z,19Z)-docosapentaenoyl-CoA + NADP(+). The enzyme catalyses (8Z,11Z,14Z)-3-oxoeicosatrienoyl-CoA + NADPH + H(+) = (3R)-hydroxy-(8Z,11Z,14Z)-eicosatrienoyl-CoA + NADP(+). It functions in the pathway lipid metabolism; fatty acid biosynthesis. The protein operates within steroid biosynthesis; estrogen biosynthesis. Catalyzes the second of the four reactions of the long-chain fatty acids elongation cycle. This endoplasmic reticulum-bound enzymatic process, allows the addition of two carbons to the chain of long- and very long-chain fatty acids/VLCFAs per cycle. This enzyme has a 3-ketoacyl-CoA reductase activity, reducing 3-ketoacyl-CoA to 3-hydroxyacyl-CoA, within each cycle of fatty acid elongation. Thereby, it may participate in the production of VLCFAs of different chain lengths that are involved in multiple biological processes as precursors of membrane lipids and lipid mediators. May also catalyze the transformation of estrone (E1) into estradiol (E2) and play a role in estrogen formation. In Macaca fascicularis (Crab-eating macaque), this protein is Very-long-chain 3-oxoacyl-CoA reductase (HSD17B12).